Reading from the N-terminus, the 790-residue chain is Pre-mRNA-splicing factor cwf3 (790 aa).

HAT repeat units follow at residues 12–44 (DLINVDDEPFELELLRDPYSLKSWLRYIKTHEG), 45–77 (STLEKRVLLFERACSELPGSYKIWKSYLELRVA), 89–121 (EAFASVNDCFERSLILLHKMPVIWKLYLQFLMK), 123–157 (PNVTKIRCTFNSALRALPVTQHDDIWDMFTKYAED), 159–190 (GGLFCIHVYRRYIQVEPRAIENYIEILCKLGL), 193–228 (EAARQYEDILNRPVFLSAKRKSNYQIWLEFSELVVQ), 233–266 (TQNIDVEKVFRAGIKRFSDQAGKLWTYLAQYYIR), 268–303 (GDYEKARSTFYEGMNNIMTVRNFTIIFDAFVEFEEQ), 331–364 (KILDKRPLYINDVLLRQNINNVDEWLRRVKFLED), 368–402 (KVVQVYTDAIKNVNPKLAHGSLGKLFSEFARFYEN), 404–440 (DDLEQSRIIFEKATHVPYKTVNELAQVWIDWAEMELR), 457–492 (APRKSHISFFDESLSPQVRLHKSSKIWMYYLDLEES), 494–526 (GTIETTRKLYDRVFELKIATPQVVVNYANLLEE), 528–562 (AYFEDSFKIYERGVALFSYPVAFELWNLYLTKFVK), 567–601 (THMERTRDLFEQALEGCPPEFSKSIYLLYADFEEK), 639–673 (YGVLATRTVYEKAIESLSDSEVKDMCLRFAEMETK), and 675–709 (GEIDRARLIYIHGSQYCDPRVETDYWKAWQEFEIR). A disordered region spans residues 769-790 (LAGFVLSKSNPQETSKITGEEN). Polar residues predominate over residues 775-790 (SKSNPQETSKITGEEN).

The protein belongs to the crooked-neck family. As to quaternary structure, belongs to the 40S cdc5-associated complex (or cwf complex), a spliceosome sub-complex reminiscent of a late-stage spliceosome composed of the U2, U5 and U6 snRNAs and at least brr2, cdc5, cwf2/prp3, cwf3/syf1, cwf4/syf3, cwf5/ecm2, spp42/cwf6, cwf7/spf27, cwf8, cwf9, cwf10, cwf11, cwf12, prp45/cwf13, cwf14, cwf15, cwf16, cwf17, cwf18, cwf19, cwf20, cwf21, cwf22, cwf23, cwf24, cwf25, cwf26, cyp7/cwf27, cwf28, cwf29/ist3, lea1, msl1, prp5/cwf1, prp10, prp12/sap130, prp17, prp22, sap61, sap62, sap114, sap145, slu7, smb1, smd1, smd3, smf1, smg1 and syf2.

It is found in the nucleus. In terms of biological role, involved in pre-mRNA splicing and cell cycle progression. The polypeptide is Pre-mRNA-splicing factor cwf3 (cwf3) (Schizosaccharomyces pombe (strain 972 / ATCC 24843) (Fission yeast)).